The following is a 338-amino-acid chain: Fructose-1,6-bisphosphatase class 1 (338 aa).

Mg(2+) contacts are provided by Glu92, Asp114, Leu116, and Asp117. Substrate-binding positions include 117 to 120 (DGSS), Asn210, Tyr243, and Lys276. Glu282 provides a ligand contact to Mg(2+).

It belongs to the FBPase class 1 family. As to quaternary structure, homotetramer. Requires Mg(2+) as cofactor.

Its subcellular location is the cytoplasm. It carries out the reaction beta-D-fructose 1,6-bisphosphate + H2O = beta-D-fructose 6-phosphate + phosphate. It functions in the pathway carbohydrate biosynthesis; gluconeogenesis. The sequence is that of Fructose-1,6-bisphosphatase class 1 from Maridesulfovibrio salexigens (strain ATCC 14822 / DSM 2638 / NCIMB 8403 / VKM B-1763) (Desulfovibrio salexigens).